Consider the following 194-residue polypeptide: Ion-translocating oxidoreductase complex subunit A (194 aa).

A run of 6 helical transmembrane segments spans residues 4–24, 39–59, 72–92, 102–122, 135–155, and 172–192; these read LVLI…QFLG, IGLA…SYLL, LRTI…EMLV, VLGI…VALL, GING…FAAM, and AIGL…SGLI.

Belongs to the NqrDE/RnfAE family. The complex is composed of six subunits: RnfA, RnfB, RnfC, RnfD, RnfE and RnfG.

It localises to the cell inner membrane. Functionally, part of a membrane-bound complex that couples electron transfer with translocation of ions across the membrane. This Azotobacter vinelandii (strain DJ / ATCC BAA-1303) protein is Ion-translocating oxidoreductase complex subunit A.